Here is a 125-residue protein sequence, read N- to C-terminus: Large ribosomal subunit protein bL12 (125 aa).

It belongs to the bacterial ribosomal protein bL12 family. Homodimer. Part of the ribosomal stalk of the 50S ribosomal subunit. Forms a multimeric L10(L12)X complex, where L10 forms an elongated spine to which 2 to 4 L12 dimers bind in a sequential fashion. Binds GTP-bound translation factors.

Forms part of the ribosomal stalk which helps the ribosome interact with GTP-bound translation factors. Is thus essential for accurate translation. The polypeptide is Large ribosomal subunit protein bL12 (Helicobacter pylori (strain P12)).